Consider the following 883-residue polypeptide: Alanine--tRNA ligase (883 aa).

Zn(2+) is bound by residues His562, His566, Cys675, and His679.

Belongs to the class-II aminoacyl-tRNA synthetase family. It depends on Zn(2+) as a cofactor.

It is found in the cytoplasm. The catalysed reaction is tRNA(Ala) + L-alanine + ATP = L-alanyl-tRNA(Ala) + AMP + diphosphate. Functionally, catalyzes the attachment of alanine to tRNA(Ala) in a two-step reaction: alanine is first activated by ATP to form Ala-AMP and then transferred to the acceptor end of tRNA(Ala). Also edits incorrectly charged Ser-tRNA(Ala) and Gly-tRNA(Ala) via its editing domain. This chain is Alanine--tRNA ligase, found in Ruegeria sp. (strain TM1040) (Silicibacter sp.).